The sequence spans 461 residues: Cysteine--tRNA ligase (461 aa).

Cys29 contacts Zn(2+). The 'HIGH' region signature appears at 31-41; sequence MTVYDFCHIGH. Zn(2+) is bound by residues Cys210, His235, and Glu239. Residues 267–271 carry the 'KMSKS' region motif; it reads KMSKS. Lys270 is an ATP binding site.

The protein belongs to the class-I aminoacyl-tRNA synthetase family. In terms of assembly, monomer. Requires Zn(2+) as cofactor.

The protein resides in the cytoplasm. It catalyses the reaction tRNA(Cys) + L-cysteine + ATP = L-cysteinyl-tRNA(Cys) + AMP + diphosphate. The polypeptide is Cysteine--tRNA ligase (Ectopseudomonas mendocina (strain ymp) (Pseudomonas mendocina)).